The sequence spans 308 residues: Mitochondrial import receptor subunit TOM40B (308 aa).

The segment at 1–29 is disordered; that stretch reads MGNTLGLAPMGALPRRSPRREEPLPNPGS. Positions 281 to 308 are required for mitochondrial targeting; sequence PLPVTLALGAFLNHWRNRFHCGFSITVG.

It belongs to the Tom40 family. In terms of assembly, forms part of the preprotein translocase of the outer mitochondrial membrane (TOM complex) containing TOMM22, TOMM40, TOMM40L and TOMM70. Interacts with mitochondrial targeting sequences.

It is found in the mitochondrion outer membrane. Functionally, potential channel-forming protein implicated in import of protein precursors into mitochondria. The sequence is that of Mitochondrial import receptor subunit TOM40B from Bos taurus (Bovine).